The primary structure comprises 109 residues: Cell division protein ZapA (109 aa).

A coiled-coil region spans residues 21-97 (PEQRDALSQA…QTIEQALLDQ (77 aa)).

This sequence belongs to the ZapA family. Type 1 subfamily. In terms of assembly, homodimer. Interacts with FtsZ.

The protein localises to the cytoplasm. Its function is as follows. Activator of cell division through the inhibition of FtsZ GTPase activity, therefore promoting FtsZ assembly into bundles of protofilaments necessary for the formation of the division Z ring. It is recruited early at mid-cell but it is not essential for cell division. The protein is Cell division protein ZapA of Enterobacter sp. (strain 638).